The sequence spans 320 residues: ATP-dependent 6-phosphofructokinase (320 aa).

ATP is bound at residue Gly12. ADP contacts are provided by residues 22-26 (RGVVR) and 55-60 (RYSVSD). ATP contacts are provided by residues 73–74 (RF) and 103–106 (GDGS). Asp104 is a Mg(2+) binding site. Position 126 to 128 (126 to 128 (TID)) interacts with substrate. Asp128 serves as the catalytic Proton acceptor. Position 155 (Arg155) interacts with ADP. Residues Arg163 and 170–172 (MGR) each bind substrate. ADP contacts are provided by residues 186–188 (GCE), Lys212, and 214–216 (KKH). Substrate is bound by residues Glu223, Arg244, and 250 to 253 (HIQR).

The protein belongs to the phosphofructokinase type A (PFKA) family. ATP-dependent PFK group I subfamily. Prokaryotic clade 'B1' sub-subfamily. In terms of assembly, homotetramer. Mg(2+) serves as cofactor.

The protein localises to the cytoplasm. It carries out the reaction beta-D-fructose 6-phosphate + ATP = beta-D-fructose 1,6-bisphosphate + ADP + H(+). It participates in carbohydrate degradation; glycolysis; D-glyceraldehyde 3-phosphate and glycerone phosphate from D-glucose: step 3/4. Allosterically activated by ADP and other diphosphonucleosides, and allosterically inhibited by phosphoenolpyruvate. Catalyzes the phosphorylation of D-fructose 6-phosphate to fructose 1,6-bisphosphate by ATP, the first committing step of glycolysis. In Klebsiella pneumoniae (strain 342), this protein is ATP-dependent 6-phosphofructokinase.